We begin with the raw amino-acid sequence, 100 residues long: Co-chaperonin GroES (100 aa).

Belongs to the GroES chaperonin family. Heptamer of 7 subunits arranged in a ring. Interacts with the chaperonin GroEL.

It localises to the cytoplasm. In terms of biological role, together with the chaperonin GroEL, plays an essential role in assisting protein folding. The GroEL-GroES system forms a nano-cage that allows encapsulation of the non-native substrate proteins and provides a physical environment optimized to promote and accelerate protein folding. GroES binds to the apical surface of the GroEL ring, thereby capping the opening of the GroEL channel. This Rhodothermus marinus (Rhodothermus obamensis) protein is Co-chaperonin GroES.